The following is a 279-amino-acid chain: Large ribosomal subunit protein uL2 (279 aa).

Disordered regions lie at residues 29–49 and 202–279; these read PVKQLTEGKSSSGGRNNNGRV and NASI…KKKG. Low complexity predominate over residues 36–49; sequence GKSSSGGRNNNGRV. A compositionally biased stretch (basic residues) spans 209-220; it reads GRSRWLGRRPHN.

The protein belongs to the universal ribosomal protein uL2 family. As to quaternary structure, part of the 50S ribosomal subunit. Forms a bridge to the 30S subunit in the 70S ribosome.

In terms of biological role, one of the primary rRNA binding proteins. Required for association of the 30S and 50S subunits to form the 70S ribosome, for tRNA binding and peptide bond formation. It has been suggested to have peptidyltransferase activity; this is somewhat controversial. Makes several contacts with the 16S rRNA in the 70S ribosome. This is Large ribosomal subunit protein uL2 from Beijerinckia indica subsp. indica (strain ATCC 9039 / DSM 1715 / NCIMB 8712).